Reading from the N-terminus, the 346-residue chain is Probable disease resistance protein At5g45440 (346 aa).

The NB-ARC domain maps to 38-116; sequence KQVEDRVETD…AYAPRIWVSM (79 aa). 85–92 is a binding site for ATP; the sequence is GEYGVGKT. Positions 315–346 are disordered; sequence FDDGKANQNGSKDGKTDSVDNPNSEESKTKPL.

In terms of biological role, possible disease resistance protein. The chain is Probable disease resistance protein At5g45440 from Arabidopsis thaliana (Mouse-ear cress).